The chain runs to 282 residues: Phosphatidylserine decarboxylase proenzyme (282 aa).

Catalysis depends on charge relay system; for autoendoproteolytic cleavage activity residues Asp85, His142, and Ser244. Catalysis depends on Ser244, which acts as the Schiff-base intermediate with substrate; via pyruvic acid; for decarboxylase activity. Residue Ser244 is modified to Pyruvic acid (Ser); by autocatalysis.

The protein belongs to the phosphatidylserine decarboxylase family. PSD-B subfamily. Prokaryotic type I sub-subfamily. Heterodimer of a large membrane-associated beta subunit and a small pyruvoyl-containing alpha subunit. Pyruvate is required as a cofactor. Post-translationally, is synthesized initially as an inactive proenzyme. Formation of the active enzyme involves a self-maturation process in which the active site pyruvoyl group is generated from an internal serine residue via an autocatalytic post-translational modification. Two non-identical subunits are generated from the proenzyme in this reaction, and the pyruvate is formed at the N-terminus of the alpha chain, which is derived from the carboxyl end of the proenzyme. The autoendoproteolytic cleavage occurs by a canonical serine protease mechanism, in which the side chain hydroxyl group of the serine supplies its oxygen atom to form the C-terminus of the beta chain, while the remainder of the serine residue undergoes an oxidative deamination to produce ammonia and the pyruvoyl prosthetic group on the alpha chain. During this reaction, the Ser that is part of the protease active site of the proenzyme becomes the pyruvoyl prosthetic group, which constitutes an essential element of the active site of the mature decarboxylase.

It is found in the cell membrane. The catalysed reaction is a 1,2-diacyl-sn-glycero-3-phospho-L-serine + H(+) = a 1,2-diacyl-sn-glycero-3-phosphoethanolamine + CO2. It participates in phospholipid metabolism; phosphatidylethanolamine biosynthesis; phosphatidylethanolamine from CDP-diacylglycerol: step 2/2. In terms of biological role, catalyzes the formation of phosphatidylethanolamine (PtdEtn) from phosphatidylserine (PtdSer). The sequence is that of Phosphatidylserine decarboxylase proenzyme from Coxiella burnetii (strain Dugway 5J108-111).